Consider the following 186-residue polypeptide: ADP-ribosylation factor-like protein alp41 (186 aa).

Glycine 2 carries the N-myristoyl glycine lipid modification. GTP-binding positions include 23 to 30 (GLDNAGKT), 66 to 70 (DIGGQ), and 125 to 128 (NKSD).

The protein belongs to the small GTPase superfamily. Arf family.

Its subcellular location is the cytoplasm. It localises to the cytoskeleton. Functionally, has a role in the cofactor-dependent pathway of microtubule biogenesis. Required for growth polarity control. The chain is ADP-ribosylation factor-like protein alp41 (alp41) from Schizosaccharomyces pombe (strain 972 / ATCC 24843) (Fission yeast).